Consider the following 253-residue polypeptide: Snake venom serine proteinase 14 (253 aa).

The N-terminal stretch at 1 to 18 (MVLIRVLANLLILQLSYA) is a signal peptide. The propeptide occupies 19-24 (QKSSEL). The Peptidase S1 domain occupies 25–244 (VIGGDECNIN…YTDWIQSIIA (220 aa)). 6 cysteine pairs are disulfide-bonded: cysteine 31/cysteine 158, cysteine 49/cysteine 65, cysteine 93/cysteine 251, cysteine 137/cysteine 205, cysteine 169/cysteine 184, and cysteine 195/cysteine 220. Active-site charge relay system residues include histidine 64 and aspartate 105. 3 N-linked (GlcNAc...) asparagine glycosylation sites follow: asparagine 116, asparagine 117, and asparagine 149. Serine 199 (charge relay system) is an active-site residue.

It belongs to the peptidase S1 family. Snake venom subfamily. In terms of assembly, monomer. In terms of tissue distribution, expressed by the venom gland.

It is found in the secreted. In terms of biological role, snake venom serine protease that may act in the hemostasis system of the prey. This is Snake venom serine proteinase 14 from Crotalus adamanteus (Eastern diamondback rattlesnake).